We begin with the raw amino-acid sequence, 928 residues long: Isoleucine--tRNA ligase (928 aa).

The 'HIGH' region signature appears at 57–67 (PFANGNIHMGH). Residue Glu-554 coordinates L-isoleucyl-5'-AMP. Residues 595–599 (KMSKS) carry the 'KMSKS' region motif. Residue Lys-598 participates in ATP binding. Residues Cys-887, Cys-890, Cys-907, and Cys-910 each contribute to the Zn(2+) site.

This sequence belongs to the class-I aminoacyl-tRNA synthetase family. IleS type 1 subfamily. In terms of assembly, monomer. Requires Zn(2+) as cofactor.

Its subcellular location is the cytoplasm. The enzyme catalyses tRNA(Ile) + L-isoleucine + ATP = L-isoleucyl-tRNA(Ile) + AMP + diphosphate. Its function is as follows. Catalyzes the attachment of isoleucine to tRNA(Ile). As IleRS can inadvertently accommodate and process structurally similar amino acids such as valine, to avoid such errors it has two additional distinct tRNA(Ile)-dependent editing activities. One activity is designated as 'pretransfer' editing and involves the hydrolysis of activated Val-AMP. The other activity is designated 'posttransfer' editing and involves deacylation of mischarged Val-tRNA(Ile). The polypeptide is Isoleucine--tRNA ligase (Lactobacillus johnsonii (strain CNCM I-12250 / La1 / NCC 533)).